The chain runs to 753 residues: Pesticidal crystal protein Cry20Aa (753 aa).

The span at 680-696 (DTTYQPSYDNYNQNASG) shows a compositional bias: polar residues. Positions 680–721 (DTTYQPSYDNYNQNASGTYDDGYNPNASDSYDQSYTNNYSQN) are disordered. Over residues 712 to 721 (QSYTNNYSQN) the composition is skewed to low complexity.

The protein belongs to the delta endotoxin family. In terms of processing, has low mosquitocidal activity probably due to rapid proteolysis to inactive 56 kDa and 43 kDa proteins.

In terms of biological role, promotes colloidosmotic lysis by binding to the midgut epithelial cells of mosquitos. Active against Aedes aegypti and Culex quinquefasciatus larvae. This Bacillus thuringiensis subsp. fukuokaensis protein is Pesticidal crystal protein Cry20Aa (cry20Aa).